A 374-amino-acid polypeptide reads, in one-letter code: Histidinol-phosphate aminotransferase (374 aa).

The residue at position 211 (Lys-211) is an N6-(pyridoxal phosphate)lysine. A compositionally biased stretch (low complexity) spans 351-368 (GNSSQDSASKSNSSANND). The segment at 351–374 (GNSSQDSASKSNSSANNDELNASN) is disordered.

The protein belongs to the class-II pyridoxal-phosphate-dependent aminotransferase family. Histidinol-phosphate aminotransferase subfamily. Homodimer. It depends on pyridoxal 5'-phosphate as a cofactor.

The catalysed reaction is L-histidinol phosphate + 2-oxoglutarate = 3-(imidazol-4-yl)-2-oxopropyl phosphate + L-glutamate. The protein operates within amino-acid biosynthesis; L-histidine biosynthesis; L-histidine from 5-phospho-alpha-D-ribose 1-diphosphate: step 7/9. In Photobacterium profundum (strain SS9), this protein is Histidinol-phosphate aminotransferase.